The sequence spans 381 residues: MNLNFMPLLHAYNHASIDFHFNSSARDFCVHEVPLYEFSNTGEHAVIQVRKSGLSTLEMLQVFSQILGVRIAELGYAGLKDKNALTTQFVSLPKKYAPLLEKNTHNLQERNLKILSLNYHHNKIKLGHLKGNRFFMRFKKMTPLNAQKTEQVLEQIVQFGMPNYFGSQRFGKFNDNHQEGLKILQNQTKFAHQKLNAFLISSYQSYLFNSLLSKRLEISKIISAFSLKENLEFFKQKNLSVDSNTLKTLKNQAHPFKILEGDVMCHYPYGKFFDALELEKESERFLKKEVVPTGLLDGKKALYAKNLSFEIEKEFRHNLLSSHAKTLGSRRFFWVFAENVTSQYIKEKAQFELGFYLPKGSYASALLKEIKHEKGENNDEF.

The active-site Nucleophile is the D81. A TRUD domain is found at 160-335 (GMPNYFGSQR…TLGSRRFFWV (176 aa)).

This sequence belongs to the pseudouridine synthase TruD family.

The enzyme catalyses uridine(13) in tRNA = pseudouridine(13) in tRNA. Responsible for synthesis of pseudouridine from uracil-13 in transfer RNAs. The protein is tRNA pseudouridine synthase D of Helicobacter pylori (strain HPAG1).